A 766-amino-acid polypeptide reads, in one-letter code: General transcription and DNA repair factor IIH helicase/translocase subunit XPB2 (766 aa).

Residues 1-56 form a disordered region; it reads MGNDERKRPTKKMKYGGKDDQKMKNIQNVEDYYDDADEDSRDGEGEEKRRDFTDLE. Residues 31–41 are compositionally biased toward acidic residues; that stretch reads DYYDDADEDSR. Positions 42–56 are enriched in basic and acidic residues; it reads DGEGEEKRRDFTDLE. The Helicase ATP-binding domain occupies 293 to 455; sequence MFGNGRARSG…DLNFLIGPKL (163 aa). Residue 306-313 participates in ATP binding; the sequence is LPCGAGKS. Positions 408–411 match the DEVH box motif; it reads DEVH. A Helicase C-terminal domain is found at 510–676; sequence RACEFLIRFH…SLPPPDAGSS (167 aa). Polar residues predominate over residues 739–748; sequence SGRQKSGNQS. Residues 739-766 are disordered; the sequence is SGRQKSGNQSKKPKDPTKRHNIFKKRYV. A Nuclear localization signal motif is present at residues 749–765; it reads KKPKDPTKRHNIFKKRY. Residues 757-766 are compositionally biased toward basic residues; it reads RHNIFKKRYV.

This sequence belongs to the helicase family. RAD25/XPB subfamily. As to quaternary structure, component of the 7-subunit TFIIH core complex composed of XPB, XPD, TFB1/GTF2H1, GTF2H2/P44, TFB4/GTF2H3, TFB2/GTF2H4 and TFB5/GTF2H5, which is active in NER. The core complex associates with the 3-subunit CDK-activating kinase (CAK) module composed of CYCH1/cyclin H1, CDKD and MAT1/At4g30820 to form the 10-subunit holoenzyme (holo-TFIIH) active in transcription. As to expression, expressed ubiquitously.

It localises to the nucleus. The enzyme catalyses Couples ATP hydrolysis with the unwinding of duplex DNA by translocating in the 3'-5' direction.. The catalysed reaction is ATP + H2O = ADP + phosphate + H(+). Its function is as follows. ATP-dependent 3'-5' DNA helicase/translocase; binds dsDNA rather than ssDNA, unzipping it in a translocase rather than classical helicase activity. Component of the general transcription and DNA repair factor IIH (TFIIH) core complex. When complexed to CDK-activating kinase (CAK), involved in RNA transcription by RNA polymerase II. The ATPase activity of XPB/ERCC3, but not its helicase activity, is required for DNA opening; it may wrap around the damaged DNA wedging it open, causing localized melting and twisting that allows XPD/ERCC2 helicase to anchor. The ATP-dependent helicase activity of XPB/ERCC3 may be required for promoter escape. Also involved in transcription-coupled nucleotide excision repair (NER) of damaged DNA. In NER, TFIIH acts by opening DNA around the lesion to allow the excision of the damaged oligonucleotide and its replacement by a new DNA fragment. The structure of the TFIIH transcription complex differs from the NER-TFIIH complex. Partially complements UV sensitivity of a yeast SSL2 mutation. The polypeptide is General transcription and DNA repair factor IIH helicase/translocase subunit XPB2 (XPB2) (Arabidopsis thaliana (Mouse-ear cress)).